A 199-amino-acid polypeptide reads, in one-letter code: Recombination protein RecR (199 aa).

The segment at 58 to 73 (CKVCTNLTDQEVCNIC) adopts a C4-type zinc-finger fold. The Toprim domain occupies 81–176 (LLICVVEDPR…KVSRIAHGIP (96 aa)).

This sequence belongs to the RecR family.

Functionally, may play a role in DNA repair. It seems to be involved in an RecBC-independent recombinational process of DNA repair. It may act with RecF and RecO. This chain is Recombination protein RecR, found in Alkaliphilus oremlandii (strain OhILAs) (Clostridium oremlandii (strain OhILAs)).